A 111-amino-acid polypeptide reads, in one-letter code: Probable 4-amino-4-deoxy-L-arabinose-phosphoundecaprenol flippase subunit ArnE (111 aa).

The Cytoplasmic portion of the chain corresponds to Met1–Ala37. A helical transmembrane segment spans residues Leu38 to Leu58. In terms of domain architecture, EamA spans Leu40 to Ser109. Topologically, residues Gln59–Asn60 are periplasmic. Residues Val61–Ala81 traverse the membrane as a helical segment. Topologically, residues Val82–Glu87 are cytoplasmic. The helical transmembrane segment at Pro88–Gly108 threads the bilayer. Residues Ser109 to Val111 lie on the Periplasmic side of the membrane.

Belongs to the ArnE family. Heterodimer of ArnE and ArnF.

The protein localises to the cell inner membrane. The protein operates within bacterial outer membrane biogenesis; lipopolysaccharide biosynthesis. In terms of biological role, translocates 4-amino-4-deoxy-L-arabinose-phosphoundecaprenol (alpha-L-Ara4N-phosphoundecaprenol) from the cytoplasmic to the periplasmic side of the inner membrane. In Escherichia coli (strain 55989 / EAEC), this protein is Probable 4-amino-4-deoxy-L-arabinose-phosphoundecaprenol flippase subunit ArnE.